Consider the following 122-residue polypeptide: Large ribosomal subunit protein bL12 (122 aa).

It belongs to the bacterial ribosomal protein bL12 family. As to quaternary structure, homodimer. Part of the ribosomal stalk of the 50S ribosomal subunit. Forms a multimeric L10(L12)X complex, where L10 forms an elongated spine to which 2 to 4 L12 dimers bind in a sequential fashion. Binds GTP-bound translation factors.

In terms of biological role, forms part of the ribosomal stalk which helps the ribosome interact with GTP-bound translation factors. Is thus essential for accurate translation. This Sodalis glossinidius (strain morsitans) protein is Large ribosomal subunit protein bL12.